The chain runs to 297 residues: Inosose dehydratase (297 aa).

The protein belongs to the IolE/MocC family. Glutathione serves as cofactor. Requires Co(2+) as cofactor. Mn(2+) is required as a cofactor.

It catalyses the reaction scyllo-inosose = 3D-3,5/4-trihydroxycyclohexane-1,2-dione + H2O. It functions in the pathway polyol metabolism; myo-inositol degradation into acetyl-CoA; acetyl-CoA from myo-inositol: step 2/7. In terms of biological role, catalyzes the dehydration of inosose (2-keto-myo-inositol, 2KMI or 2,4,6/3,5-pentahydroxycyclohexanone) to 3D-(3,5/4)-trihydroxycyclohexane-1,2-dione (D-2,3-diketo-4-deoxy-epi-inositol). In Clostridium perfringens (strain ATCC 13124 / DSM 756 / JCM 1290 / NCIMB 6125 / NCTC 8237 / Type A), this protein is Inosose dehydratase.